Consider the following 180-residue polypeptide: CD-NTase/cGAS isopeptidase (180 aa).

Residues 33-165 (IVISSSTIEQ…AGSYSLSASV (133 aa)) form the MPN domain. The Proton donor/acceptor role is filled by glutamate 54. Zn(2+) contacts are provided by histidine 115, histidine 117, and aspartate 128.

Belongs to the peptidase M67B family. Cap3 isopeptidase subfamily.

Metalloprotease priming reversal component of a CBASS antivirus system. CBASS (cyclic oligonucleotide-based antiphage signaling system) provides immunity against bacteriophages. The CD-NTase protein (CdnD) synthesizes cyclic nucleotides in response to infection; these serve as specific second messenger signals. The signals activate a diverse range of effectors, leading to bacterial cell death and thus abortive phage infection. A type II-C(AAG) CBASS system. Functionally, reverses the primed state of DncV, the CD-NTase. Cleaves a CdnD-GFP (green fluorescent protein) fusion protein precisely at the C-terminus of CdnD. Overexpression decreases the efficacy of CBASS protection against phage T2. Antagonism of phage defense upon overexpression is CBASS-system specific, Cap3 from this bacteria only antagonizes its cognate CBASS system and not that of C.freundii, E.coli or V.cholerae. Its function is as follows. Protects E.coli against phage T2 infection. When the cdnD-cap2-cap3-cap4 operon is introduced in E.coli there is a more than 10(3) decrease in the efficiency of T2 plaque formation. The operon does not protect against phage T5 and only about 10-fold against T7. This chain is CD-NTase/cGAS isopeptidase, found in Enterobacter hormaechei subsp. hoffmannii (strain UCI 50).